Consider the following 417-residue polypeptide: S-adenosylmethionine synthase (417 aa).

His-16 serves as a coordination point for ATP. Residue Asp-18 participates in Mg(2+) binding. Glu-44 is a binding site for K(+). Glu-57 and Gln-100 together coordinate L-methionine. A flexible loop region spans residues Gln-100–Thr-110. ATP-binding positions include Asp-175–Lys-177, Lys-251–Phe-252, Asp-260, Arg-266–Lys-267, Ala-283, and Lys-287. Asp-260 is an L-methionine binding site. An L-methionine-binding site is contributed by Lys-291.

This sequence belongs to the AdoMet synthase family. In terms of assembly, homotetramer; dimer of dimers. It depends on Mg(2+) as a cofactor. Requires K(+) as cofactor.

It localises to the cytoplasm. It carries out the reaction L-methionine + ATP + H2O = S-adenosyl-L-methionine + phosphate + diphosphate. It participates in amino-acid biosynthesis; S-adenosyl-L-methionine biosynthesis; S-adenosyl-L-methionine from L-methionine: step 1/1. Functionally, catalyzes the formation of S-adenosylmethionine (AdoMet) from methionine and ATP. The overall synthetic reaction is composed of two sequential steps, AdoMet formation and the subsequent tripolyphosphate hydrolysis which occurs prior to release of AdoMet from the enzyme. The sequence is that of S-adenosylmethionine synthase from Synechococcus elongatus (strain ATCC 33912 / PCC 7942 / FACHB-805) (Anacystis nidulans R2).